We begin with the raw amino-acid sequence, 1017 residues long: Dopamine dehydroxylase (1017 aa).

The segment at residues 1 to 34 (MGNLTMSRRTFVKTAAITGAAAAAFGASTHTALA) is a signal peptide (tat-type signal). In terms of domain architecture, 4Fe-4S Mo/W bis-MGD-type spans 45–103 (DTVAVKTCCRGCGKMECGVKVIVQNGRAIRVEGDEGAFQSMGNCCTKSQSSIQAAYHPD). Positions 53, 56, 61, and 89 each coordinate [4Fe-4S] cluster. Lysine 91 functions as the Electron donor/acceptor in the catalytic mechanism.

It belongs to the prokaryotic molybdopterin-containing oxidoreductase family. [4Fe-4S] cluster is required as a cofactor. Requires Mo-bis(molybdopterin guanine dinucleotide) as cofactor. Post-translationally, predicted to be exported by the Tat system. The position of the signal peptide cleavage has not been experimentally proven.

It carries out the reaction dopamine + AH2 = 3-tyramine + A + H2O. Functionally, involved in drug metabolism, as part of an interspecies gut bacterial pathway for Levodopa (L-dopa) metabolism, acting on dopamine produced by Enterecoccus L-dopa decarboxylase. Removes the para hydroxyl group of dopamine to produce m-tyramine (3-tyramine). It is possible that dopamine dehydroxylation influences the multiple side effects of L-dopa administration linked to dopamine production in the treatment of Parkinson's disease. The sequence is that of Dopamine dehydroxylase from Eggerthella lenta (Eubacterium lentum).